The chain runs to 222 residues: Large ribosomal subunit protein uL11c (222 aa).

Positions 1–20 (MASSSLSTLCSSTSSSLHPN) are disordered. Residues 1 to 62 (MASSSLSTLC…TPRFLTVIAM (62 aa)) constitute a chloroplast transit peptide.

This sequence belongs to the universal ribosomal protein uL11 family. Part of the ribosomal stalk of the 50S ribosomal subunit. Interacts with L10 and the large rRNA to form the base of the stalk. L10 forms an elongated spine to which L12 dimers bind in a sequential fashion forming a multimeric L10(L12)X complex.

The protein localises to the plastid. It localises to the chloroplast. Forms part of the ribosomal stalk which helps the ribosome interact with GTP-bound translation factors. This Arabidopsis thaliana (Mouse-ear cress) protein is Large ribosomal subunit protein uL11c (RPL11).